Consider the following 335-residue polypeptide: Histidinol-phosphate aminotransferase (335 aa).

Lys202 is modified (N6-(pyridoxal phosphate)lysine).

The protein belongs to the class-II pyridoxal-phosphate-dependent aminotransferase family. Histidinol-phosphate aminotransferase subfamily. Homodimer. Requires pyridoxal 5'-phosphate as cofactor.

It catalyses the reaction L-histidinol phosphate + 2-oxoglutarate = 3-(imidazol-4-yl)-2-oxopropyl phosphate + L-glutamate. It participates in amino-acid biosynthesis; L-histidine biosynthesis; L-histidine from 5-phospho-alpha-D-ribose 1-diphosphate: step 7/9. In Thermotoga maritima (strain ATCC 43589 / DSM 3109 / JCM 10099 / NBRC 100826 / MSB8), this protein is Histidinol-phosphate aminotransferase.